Here is a 310-residue protein sequence, read N- to C-terminus: Dicarboxylate carrier UCP2 (310 aa).

The Mitochondrial intermembrane portion of the chain corresponds to 1–10 (MVGFRAGDVP). A helical transmembrane segment spans residues 11 to 32 (PTATVKFIGAGTAACIADLFTF). Solcar repeat units lie at residues 11–107 (PTAT…VKQF), 115–204 (AGIG…IKDA), and 213–298 (DDLP…LKRA). Topologically, residues 33–78 (PLDTAKVRLQIQGENKASTNMGRGPVKYRGVFGTISTMVRVEGPRS) are mitochondrial matrix. A helical membrane pass occupies residues 79–101 (LYSGLVAGLQRQMSFASVRIGLY). Residues 102–120 (DSVKQFYTKGSDHAGIGSR) lie on the Mitochondrial intermembrane side of the membrane. The helical transmembrane segment at 121 to 137 (LMAGCTTGAMAVAVAQP) threads the bilayer. Residues 138 to 181 (TDVLKVRFQAQVSAGASKRYHSTMDAYRTIAKEEGFRGLWKGTG) lie on the Mitochondrial matrix side of the membrane. A helical transmembrane segment spans residues 182 to 198 (PNITRNAIVNCTELVTY). Residues 199–215 (DLIKDALLKSSLMTDDL) are Mitochondrial intermembrane-facing. A helical transmembrane segment spans residues 216–235 (PCHFTSAFGAGFCTTIIASP). Topologically, residues 236–269 (VDVVKTRYMNSAQGQYSSALNCAVAMLTKKGPKA) are mitochondrial matrix. The helical transmembrane segment at 270–292 (FFKGFMPSFLRLGSWNVVMFVTY) threads the bilayer. Residues 277-299 (SFLRLGSWNVVMFVTYEQLKRAM) form a purine nucleotide binding region. Topologically, residues 293 to 310 (EQLKRAMMAARQNWHTPL) are mitochondrial intermembrane.

The protein belongs to the mitochondrial carrier (TC 2.A.29) family. Homotetramer. Adopts an asymmetrical dimer of dimers functional form.

The protein localises to the mitochondrion inner membrane. The enzyme catalyses L-aspartate(out) + phosphate(in) + H(+)(in) = L-aspartate(in) + phosphate(out) + H(+)(out). It carries out the reaction oxaloacetate(out) + phosphate(in) + H(+)(in) = oxaloacetate(in) + phosphate(out) + H(+)(out). It catalyses the reaction (S)-malate(out) + phosphate(in) + H(+)(in) = (S)-malate(in) + phosphate(out) + H(+)(out). The catalysed reaction is malonate(out) + phosphate(in) + H(+)(in) = malonate(in) + phosphate(out) + H(+)(out). The enzyme catalyses sulfate(out) + phosphate(in) + H(+)(in) = sulfate(in) + phosphate(out) + H(+)(out). It carries out the reaction (S)-malate(out) = (S)-malate(in). It catalyses the reaction L-aspartate(out) = L-aspartate(in). The catalysed reaction is phosphate(in) = phosphate(out). The enzyme catalyses chloride(in) = chloride(out). It carries out the reaction H(+)(in) = H(+)(out). It catalyses the reaction a long-chain fatty acid(out) = a long-chain fatty acid(in). Its function is as follows. UCP are mitochondrial transporter proteins that create proton leaks across the inner mitochondrial membrane, thus uncoupling oxidative phosphorylation from ATP synthesis. As a result, energy is dissipated in the form of heat. Antiporter that exports dicarboxylate intermediates of the Krebs cycle in exchange for phosphate plus a proton across the inner membrane of mitochondria, a process driven by mitochondrial motive force with an overall impact on glycolysis, glutaminolysis and glutathione-dependent redox balance. Continuous export of oxaloacetate and related four-carbon dicarboxylates from mitochondrial matrix into the cytosol negatively regulates the oxidation of acetyl-CoA substrates via the Krebs cycle, lowering the ATP/ADP ratio and reactive oxygen species (ROS) production. May mediate inducible proton entry into the mitochondrial matrix affecting ATP turnover as a protection mechanism against oxidative stress. The proton currents are most likely associated with fatty acid flipping across the inner membrane of mitochondria in a metabolic process regulated by free fatty acids and purine nucleotides. The polypeptide is Dicarboxylate carrier UCP2 (ucp2) (Danio rerio (Zebrafish)).